The sequence spans 283 residues: Pantothenate synthetase (283 aa).

31-38 (MGALHDGH) lines the ATP pocket. H38 (proton donor) is an active-site residue. Residue Q62 coordinates (R)-pantoate. Q62 lines the beta-alanine pocket. Residue 148–151 (GKKD) coordinates ATP. A (R)-pantoate-binding site is contributed by Q154. ATP-binding positions include V177 and 185 to 188 (KSSR).

It belongs to the pantothenate synthetase family. As to quaternary structure, homodimer.

Its subcellular location is the cytoplasm. The catalysed reaction is (R)-pantoate + beta-alanine + ATP = (R)-pantothenate + AMP + diphosphate + H(+). It participates in cofactor biosynthesis; (R)-pantothenate biosynthesis; (R)-pantothenate from (R)-pantoate and beta-alanine: step 1/1. In terms of biological role, catalyzes the condensation of pantoate with beta-alanine in an ATP-dependent reaction via a pantoyl-adenylate intermediate. This is Pantothenate synthetase from Staphylococcus aureus (strain MSSA476).